The following is a 250-amino-acid chain: Triosephosphate isomerase (250 aa).

8–10 (NWK) provides a ligand contact to substrate. The active-site Electrophile is the His93. The active-site Proton acceptor is the Glu165. 2 residues coordinate substrate: Gly171 and Ser211.

It belongs to the triosephosphate isomerase family. In terms of assembly, homodimer.

It is found in the cytoplasm. It catalyses the reaction D-glyceraldehyde 3-phosphate = dihydroxyacetone phosphate. It functions in the pathway carbohydrate biosynthesis; gluconeogenesis. The protein operates within carbohydrate degradation; glycolysis; D-glyceraldehyde 3-phosphate from glycerone phosphate: step 1/1. Functionally, involved in the gluconeogenesis. Catalyzes stereospecifically the conversion of dihydroxyacetone phosphate (DHAP) to D-glyceraldehyde-3-phosphate (G3P). This chain is Triosephosphate isomerase, found in Malacoplasma penetrans (strain HF-2) (Mycoplasma penetrans).